The chain runs to 601 residues: UvrABC system protein C (601 aa).

One can recognise a GIY-YIG domain in the interval 15–94 (LQPGVYLFKN…IKSYKPRYNI (80 aa)). One can recognise a UVR domain in the interval 202–237 (QEIVREKEKEMAMAARSLEFEKAARLRDQIQSLRQL).

This sequence belongs to the UvrC family. Interacts with UvrB in an incision complex.

The protein resides in the cytoplasm. In terms of biological role, the UvrABC repair system catalyzes the recognition and processing of DNA lesions. UvrC both incises the 5' and 3' sides of the lesion. The N-terminal half is responsible for the 3' incision and the C-terminal half is responsible for the 5' incision. The chain is UvrABC system protein C from Syntrophomonas wolfei subsp. wolfei (strain DSM 2245B / Goettingen).